Here is a 77-residue protein sequence, read N- to C-terminus: Translation initiation factor IF-1, chloroplastic (77 aa).

The S1-like domain occupies 1–71; sequence MKEQKWIHEG…TRGRIIYRLR (71 aa).

The protein belongs to the IF-1 family. As to quaternary structure, component of the 30S ribosomal translation pre-initiation complex which assembles on the 30S ribosome in the order IF-2 and IF-3, IF-1 and N-formylmethionyl-tRNA(fMet); mRNA recruitment can occur at any time during PIC assembly.

It is found in the plastid. The protein localises to the chloroplast. In terms of biological role, one of the essential components for the initiation of protein synthesis. Stabilizes the binding of IF-2 and IF-3 on the 30S subunit to which N-formylmethionyl-tRNA(fMet) subsequently binds. Helps modulate mRNA selection, yielding the 30S pre-initiation complex (PIC). Upon addition of the 50S ribosomal subunit IF-1, IF-2 and IF-3 are released leaving the mature 70S translation initiation complex. The chain is Translation initiation factor IF-1, chloroplastic from Spinacia oleracea (Spinach).